The following is a 931-amino-acid chain: Translation initiation factor IF-2 (931 aa).

The tract at residues 32–310 (KSASSTVEPP…SSKARKNRLA (279 aa)) is disordered. Residues 50-59 (FASSGQGNAS) are compositionally biased toward polar residues. Residues 82–96 (PAAPSAPKPAAPAAP) show a composition bias toward pro residues. Residues 156–168 (GNAPQGGNNANGA) are compositionally biased toward low complexity. Composition is skewed to gly residues over residues 217 to 238 (RPGQ…GGAK), 248 to 271 (GQGG…GFQG), and 281 to 298 (ARGG…GRQG). The tr-type G domain maps to 424–596 (PRPPVVTVMG…VLLTADAELD (173 aa)). The tract at residues 433–440 (GHVDHGKT) is G1. GTP is bound at residue 433-440 (GHVDHGKT). A G2 region spans residues 458–462 (GITQR). Residues 483–486 (DTPG) are G3. Residues 483–487 (DTPGH) and 537–540 (NKID) each bind GTP. The interval 537-540 (NKID) is G4. A G5 region spans residues 573–575 (SAK).

The protein belongs to the TRAFAC class translation factor GTPase superfamily. Classic translation factor GTPase family. IF-2 subfamily.

The protein localises to the cytoplasm. In terms of biological role, one of the essential components for the initiation of protein synthesis. Protects formylmethionyl-tRNA from spontaneous hydrolysis and promotes its binding to the 30S ribosomal subunits. Also involved in the hydrolysis of GTP during the formation of the 70S ribosomal complex. The polypeptide is Translation initiation factor IF-2 (Bifidobacterium adolescentis (strain ATCC 15703 / DSM 20083 / NCTC 11814 / E194a)).